The primary structure comprises 441 residues: Collagen alpha-1(XXVI) chain (441 aa).

An N-terminal signal peptide occupies residues Met1–Ala20. In terms of domain architecture, EMI spans Arg52–Glu128. 3 cysteine pairs are disulfide-bonded: Cys56–Cys118, Cys83–Cys89, and Cys117–Cys126. Asn70 is a glycosylation site (N-linked (GlcNAc...) asparagine). Asn132 carries N-linked (GlcNAc...) asparagine glycosylation. Disordered stretches follow at residues Ala156 to Glu362 and Pro390 to Lys441. Collagen-like domains lie at Gly199–Ser267 and Gly302–Lys355. 4 stretches are compositionally biased toward pro residues: residues Pro200–Pro215, Ala231–Arg243, Pro252–Asn269, and Pro306–Thr327. Positions Val348 to Ala357 are enriched in basic and acidic residues.

Homotrimer or heterotrimer. Hydroxylated on proline residues.

It is found in the secreted. The protein localises to the extracellular space. Its subcellular location is the extracellular matrix. The chain is Collagen alpha-1(XXVI) chain (COL26A1) from Homo sapiens (Human).